The following is a 466-amino-acid chain: MAKTLYEKVWDAHIVVAAEGEAPIIYVDRHLVHEVTSPQAFSGLEVAGRKMRAPEKTFATMDHNTSTTSASLDALSPMARTQVQTLERNCKEFGVRLYDIHHKNQGIVHVMGPELGITLPGTVIVCGDSHTATHGAFGALAFGIGTSEVEHVMATQTLRQLKAKTMKIEVRGHVAEGITAKDIVLAIIGKIGMDGGTGYVVEFCGEAIEALTMEGRMTVCNMAIEMGAKAGMIAPDATTAEYLKGREFAPKGDNWQQAIAAWAELKSDADATFDATVVLQASDIAPQLTWGTNPGQVVAIDQFVPNPAEETNSTVRSSIEKALEYVDLSAGTLMTNVGINKVFIGSCTNSRIEDLRAAAVHAKGRQVAEGVKAIVVPGSGLVKEQAEAEGLDKIFLEAGFEWRLPGCSMCLAMNDDKLEAGDRCASTSNRNFEGRQGRGSRTHLVSPAMAAAAAVAGHFVDIRKPY.

Residues C347, C407, and C410 each coordinate [4Fe-4S] cluster.

Belongs to the aconitase/IPM isomerase family. LeuC type 1 subfamily. In terms of assembly, heterodimer of LeuC and LeuD. Requires [4Fe-4S] cluster as cofactor.

It catalyses the reaction (2R,3S)-3-isopropylmalate = (2S)-2-isopropylmalate. It functions in the pathway amino-acid biosynthesis; L-leucine biosynthesis; L-leucine from 3-methyl-2-oxobutanoate: step 2/4. Functionally, catalyzes the isomerization between 2-isopropylmalate and 3-isopropylmalate, via the formation of 2-isopropylmaleate. This Shewanella piezotolerans (strain WP3 / JCM 13877) protein is 3-isopropylmalate dehydratase large subunit.